Here is a 228-residue protein sequence, read N- to C-terminus: Cytochrome b6-f complex iron-sulfur subunit 2, chloroplastic (228 aa).

The transit peptide at 1–49 (MASSTLSPVTQLCSSKSGLSSVSQCLLLKPMKINSHGLGKDKRMKVKCM) directs the protein to the chloroplast. A helical transmembrane segment spans residues 71 to 91 (LLLGALSLPTAGMLVPYATFF). Residues 115 to 211 (ASEWLKTHPP…ADIDDGKVVF (97 aa)) enclose the Rieske domain. Positions 157, 159, 175, and 178 each coordinate [2Fe-2S] cluster. A disulfide bridge links Cys162 with Cys177.

This sequence belongs to the Rieske iron-sulfur protein family. The 4 large subunits of the cytochrome b6-f complex are cytochrome b6, subunit IV (17 kDa polypeptide, petD), cytochrome f and the Rieske protein, while the 4 small subunits are petG, petL, petM and petN. The complex functions as a dimer. [2Fe-2S] cluster is required as a cofactor.

Its subcellular location is the plastid. The protein localises to the chloroplast thylakoid membrane. The enzyme catalyses 2 oxidized [plastocyanin] + a plastoquinol + 2 H(+)(in) = 2 reduced [plastocyanin] + a plastoquinone + 4 H(+)(out). Its function is as follows. Component of the cytochrome b6-f complex, which mediates electron transfer between photosystem II (PSII) and photosystem I (PSI), cyclic electron flow around PSI, and state transitions. The polypeptide is Cytochrome b6-f complex iron-sulfur subunit 2, chloroplastic (petC2) (Nicotiana tabacum (Common tobacco)).